The primary structure comprises 726 residues: Catalase-peroxidase (726 aa).

Residues 1-33 (MSTSDDIHNTTATGKCPFHQGGHDQSAGAGTTT) form a disordered region. The segment at residues 105 to 226 (WHGAGTYRSI…LGATEMGLIY (122 aa)) is a cross-link (tryptophyl-tyrosyl-methioninium (Trp-Tyr) (with M-252)). The active-site Proton acceptor is histidine 106. Residues 226–252 (YVNPEGPDHSGEPLSAAAAIRATFGNM) constitute a cross-link (tryptophyl-tyrosyl-methioninium (Tyr-Met) (with W-105)). Histidine 267 is a binding site for heme b.

Belongs to the peroxidase family. Peroxidase/catalase subfamily. As to quaternary structure, homodimer or homotetramer. Heme b serves as cofactor. Post-translationally, formation of the three residue Trp-Tyr-Met cross-link is important for the catalase, but not the peroxidase activity of the enzyme.

The enzyme catalyses H2O2 + AH2 = A + 2 H2O. It carries out the reaction 2 H2O2 = O2 + 2 H2O. Bifunctional enzyme with both catalase and broad-spectrum peroxidase activity. This Shigella boydii serotype 18 (strain CDC 3083-94 / BS512) protein is Catalase-peroxidase.